The sequence spans 511 residues: uncharacterized protein (511 aa).

A disordered region spans residues 59-79 (VPVAANDDQPDGSRQSVRGRQ).

Belongs to the transposase 25 family.

This is an uncharacterized protein from Sinorhizobium fredii (strain NBRC 101917 / NGR234).